Consider the following 363-residue polypeptide: Isopentenyl-diphosphate delta-isomerase (363 aa).

7-8 contacts substrate; it reads RK. FMN contacts are provided by residues 71 to 73, S101, and N130; that span reads AMT. Q160 serves as a coordination point for substrate. E161 is a Mg(2+) binding site. FMN-binding positions include K192, S217, T222, 270-272, and 291-292; these read GIR and AG.

Belongs to the IPP isomerase type 2 family. In terms of assembly, homooctamer. Dimer of tetramers. FMN is required as a cofactor. Requires NADPH as cofactor. The cofactor is Mg(2+).

It localises to the cytoplasm. The catalysed reaction is isopentenyl diphosphate = dimethylallyl diphosphate. Involved in the biosynthesis of isoprenoids. Catalyzes the 1,3-allylic rearrangement of the homoallylic substrate isopentenyl (IPP) to its allylic isomer, dimethylallyl diphosphate (DMAPP). The protein is Isopentenyl-diphosphate delta-isomerase of Symbiobacterium thermophilum (strain DSM 24528 / JCM 14929 / IAM 14863 / T).